The following is a 2370-amino-acid chain: Genome polyprotein (2370 aa).

Gly-112 carries the N-myristoyl glycine; by host lipid modification. Disordered stretches follow at residues 140 to 173 (VGDMPTASSSEAPLGSNKGGSSTSPKSTSNGNVV) and 704 to 736 (GADGAEVQPAPTSDLSDGNPTTDPAPRDNFDYP). The span at 154–171 (GSNKGGSSTSPKSTSNGN) shows a compositional bias: low complexity. The span at 713 to 725 (APTSDLSDGNPTT) shows a compositional bias: polar residues. Residues 1358–1522 (YSTALSAISL…AAFSAAAALK (165 aa)) form the SF3 helicase domain. Residue 1384–1391 (GPPGTGKS) coordinates ATP. A lipid anchor (N-myristoyl glycine; by host) is attached at Gly-1597. A helical transmembrane segment spans residues 1646–1666 (IFAASSFLSLIAATLTIVRCL). Positions 1674–1696 (GAYSGTPVPKPRKKDLPKQPVYS) are disordered. Residue Tyr-1676 is modified to O-(5'-phospho-RNA)-tyrosine. The Peptidase C3 domain occupies 1697-1886 (GPVRRQGFDP…FSARLTPERV (190 aa)). Catalysis depends on for protease 3C activity residues His-1745, Glu-1776, and Cys-1849. Polar residues predominate over residues 2007 to 2016 (SPGYPWTTQG). Residues 2007–2026 (SPGYPWTTQGRSRRSLFDED) form a disordered region. The 118-residue stretch at 2122 to 2239 (SNVWSIDYSC…GSNQDFHPRE (118 aa)) folds into the RdRp catalytic domain. Active-site for RdRp activity residues include Asp-2128 and Asp-2225.

Interacts with capsid protein VP1. Interacts with capsid protein VP3. In terms of assembly, interacts with capsid protein VP0. Interacts with capsid protein VP3. As to quaternary structure, interacts with capsid protein VP0. Interacts with capsid protein VP1. Homodimer. Interacts with protein 2B. Interacts with protein 2C. In terms of assembly, homodimer. Interacts with host ABCD3. Interacts with protein 2A. Interacts with host ACBD3. As to quaternary structure, homodimer. Interacts with host ABCD3. Interacts with protein 2A. Interacts with protein 3A. Interacts with protein 3C. Interacts with host ACBD3. Homodimer. Interacts with host ABCD3 (via GOLD domain) and PI4KB; these interactions allow the formation of a viral protein/ACBD3/PI4KB complex in order to synthesize PI4P at the viral RNA replication sites. Interacts with protein 2C. Interacts with protein 3C. Protein 3C: Interacts with protein 2A. Protein 3C: Interacts with protein 2C. In terms of processing, specific enzymatic cleavages by the viral protease in vivo yield a variety of precursors and mature proteins. The leader protein-VP0 junction is cleaved by 3C proteinase. The VP1/2A junction is cleaved by the protein 3CD in association with protein 2A. Uridylylated by the polymerase and is covalently linked to the 5'-end of genomic RNA. This uridylylated form acts as a nucleotide-peptide primer for the polymerase.

It is found in the virion. The protein localises to the host cytoplasm. Its subcellular location is the host cytoplasmic vesicle membrane. It localises to the host Golgi apparatus membrane. The catalysed reaction is RNA(n) + a ribonucleoside 5'-triphosphate = RNA(n+1) + diphosphate. It catalyses the reaction Selective cleavage of Gln-|-Gly bond in the poliovirus polyprotein. In other picornavirus reactions Glu may be substituted for Gln, and Ser or Thr for Gly.. The enzyme catalyses ATP + H2O = ADP + phosphate + H(+). Its function is as follows. Required for viral RNA replication and viral RNA encapsidation. Does not have any proteolytic activity. Forms an icosahedral capsid of pseudo T=3 symmetry with capsid proteins VP0 and VP3. Together they form an icosahedral capsid composed of 60 copies of each VP0, VP1, and VP3. All the three latter proteins contain a beta-sheet structure called beta-barrel jelly roll. In terms of biological role, forms an icosahedral capsid of pseudo T=3 symmetry with capsid proteins VP1 and VP3. Together they form an icosahedral capsid composed of 60 copies of each VP0, VP1, and VP3. All the three latter proteins contain a beta-sheet structure called beta-barrel jelly roll. Functionally, forms an icosahedral capsid of pseudo T=3 symmetry with capsid proteins VP0 and VP1. Together they form an icosahedral capsid composed of 60 copies of each VP0, VP1, and VP3. All the three latter proteins contain a beta-sheet structure called beta-barrel jelly roll. Its function is as follows. Required for viral RNA replication. Does not have any proteolytic activity. Affects membrane integrity and causes an increase in membrane permeability. In terms of biological role, induces and associates with structural rearrangements of intracellular membranes. Displays RNA-binding, nucleotide binding and NTPase activities. May play a role in virion morphogenesis and viral RNA encapsidation by interacting with the capsid protein VP3. Functionally, serves as membrane anchor via its hydrophobic domain. Plays an essential role in viral RNA replication by recruiting PI4KB at the viral replication sites, thereby allowing the formation of rearranged membranous structures where viral replication takes place. Its function is as follows. Forms a primer, VPg-pU, which is utilized by the polymerase for the initiation of RNA chains. Cysteine protease that generates mature viral proteins from the precursor polyprotein. In addition to its proteolytic activity, it binds to viral RNA, and thus influences viral genome replication. RNA and substrate cooperatively bind to the protease. In terms of biological role, replicates the genomic and antigenomic RNAs by recognizing replications specific signals. Performs VPg uridylylation. The chain is Genome polyprotein from Homo sapiens (Human).